The chain runs to 427 residues: Serine--tRNA ligase (427 aa).

L-serine is bound at residue 230–232 (TAE). 261–263 (RAE) is a binding site for ATP. L-serine is bound at residue Glu284. 348–351 (EISS) provides a ligand contact to ATP. Ser384 provides a ligand contact to L-serine.

It belongs to the class-II aminoacyl-tRNA synthetase family. Type-1 seryl-tRNA synthetase subfamily. Homodimer. The tRNA molecule binds across the dimer.

The protein localises to the cytoplasm. The enzyme catalyses tRNA(Ser) + L-serine + ATP = L-seryl-tRNA(Ser) + AMP + diphosphate + H(+). The catalysed reaction is tRNA(Sec) + L-serine + ATP = L-seryl-tRNA(Sec) + AMP + diphosphate + H(+). It participates in aminoacyl-tRNA biosynthesis; selenocysteinyl-tRNA(Sec) biosynthesis; L-seryl-tRNA(Sec) from L-serine and tRNA(Sec): step 1/1. Catalyzes the attachment of serine to tRNA(Ser). Is also able to aminoacylate tRNA(Sec) with serine, to form the misacylated tRNA L-seryl-tRNA(Sec), which will be further converted into selenocysteinyl-tRNA(Sec). The chain is Serine--tRNA ligase from Moorella thermoacetica (strain ATCC 39073 / JCM 9320).